A 155-amino-acid chain; its full sequence is SsrA-binding protein (155 aa).

It belongs to the SmpB family.

It localises to the cytoplasm. Required for rescue of stalled ribosomes mediated by trans-translation. Binds to transfer-messenger RNA (tmRNA), required for stable association of tmRNA with ribosomes. tmRNA and SmpB together mimic tRNA shape, replacing the anticodon stem-loop with SmpB. tmRNA is encoded by the ssrA gene; the 2 termini fold to resemble tRNA(Ala) and it encodes a 'tag peptide', a short internal open reading frame. During trans-translation Ala-aminoacylated tmRNA acts like a tRNA, entering the A-site of stalled ribosomes, displacing the stalled mRNA. The ribosome then switches to translate the ORF on the tmRNA; the nascent peptide is terminated with the 'tag peptide' encoded by the tmRNA and targeted for degradation. The ribosome is freed to recommence translation, which seems to be the essential function of trans-translation. The protein is SsrA-binding protein of Streptococcus pneumoniae (strain Hungary19A-6).